The sequence spans 585 residues: Bestrophin-1 (585 aa).

The Cytoplasmic portion of the chain corresponds to 1–31 (MTITYTSQVANARLGSFSRLLLCWRGSIYKL). Alanine 10 serves as a coordination point for Ca(2+). Residues 32–51 (LYGEFFIFLLCYYIIRFIYR) traverse the membrane as a helical segment. At 52–60 (LALTEEQQL) the chain is on the extracellular side. A helical transmembrane segment spans residues 61 to 82 (MFEKLTLYCDSYIQLIPISFVL). The Cytoplasmic segment spans residues 83–237 (GFYVTLVVTR…DWISIPLVYT (155 aa)). The helical transmembrane segment at 238-255 (QVVTVAVYSFFLTCLVGR) threads the bilayer. Residues 256 to 274 (QFLNPAKAYPGHELDLVVP) lie on the Extracellular side of the membrane. Residues 275–288 (VFTFLQFFFYVGWL) traverse the membrane as a helical segment. The Cytoplasmic segment spans residues 289-585 (KVAEQLINPF…ALENRDEAHS (297 aa)). The Ca(2+) site is built by glutamine 293, asparagine 296, aspartate 301, and aspartate 304. An auto-inhibitory segment region spans residues 346–379 (PYTAASAQFRRASFMGSTFNISLNKEEMEFQPNQ).

The protein belongs to the anion channel-forming bestrophin (TC 1.A.46) family. Calcium-sensitive chloride channel subfamily. Interacts with YWHAG; this interaction promotes the ligand-gated L-glutamate channel activity leading to the positive regulation of NMDA glutamate receptor activity through the L-glutamate secretion.

It localises to the cell membrane. Its subcellular location is the basolateral cell membrane. The catalysed reaction is chloride(in) = chloride(out). It carries out the reaction hydrogencarbonate(in) = hydrogencarbonate(out). The enzyme catalyses 4-aminobutanoate(in) = 4-aminobutanoate(out). It catalyses the reaction L-glutamate(out) = L-glutamate(in). In terms of biological role, ligand-gated anion channel that allows the movement of anions across cell membranes when activated by calcium (Ca2+). Allows the movement of chloride and hydrogencarbonate. Found in a partially open conformation leading to significantly smaller chloride movement. Upon F2R/PAR-1 activation, the sequestered calcium is released into the cytosol of astrocytes, leading to the (Ca2+)-dependent release of L-glutamate into the synaptic cleft that targets the neuronal postsynaptic GRIN2A/NMDAR receptor resulting in the synaptic plasticity regulation. Upon activation of the norepinephrine-alpha-1 adrenergic receptor signaling pathway, transports as well D-serine than L-glutamate in a (Ca2+)-dependent manner, leading to activation of adjacent NMDAR receptors and therefore regulates the heterosynaptic long-term depression and metaplasticity during initial memory acquisition. Releases the 4-aminobutanoate neurotransmitter in a (Ca2+)-dependent manner, and participates in its tonic release from cerebellar glial cells. The polypeptide is Bestrophin-1 (BEST1) (Macaca fascicularis (Crab-eating macaque)).